Here is a 164-residue protein sequence, read N- to C-terminus: Endoribonuclease YbeY (164 aa).

Zn(2+) is bound by residues His130, His134, and His140.

This sequence belongs to the endoribonuclease YbeY family. It depends on Zn(2+) as a cofactor.

It localises to the cytoplasm. Single strand-specific metallo-endoribonuclease involved in late-stage 70S ribosome quality control and in maturation of the 3' terminus of the 16S rRNA. This chain is Endoribonuclease YbeY, found in Streptococcus mutans serotype c (strain ATCC 700610 / UA159).